A 497-amino-acid polypeptide reads, in one-letter code: 3-octaprenyl-4-hydroxybenzoate carboxy-lyase (497 aa).

Mn(2+) is bound at residue N175. Prenylated FMN-binding positions include 178-180, 192-194, and 197-198; these read IYR, RWL, and RG. Residue E241 coordinates Mn(2+). Residue D290 is the Proton donor of the active site.

This sequence belongs to the UbiD family. Homohexamer. Prenylated FMN is required as a cofactor. The cofactor is Mn(2+).

The protein localises to the cell membrane. The catalysed reaction is a 4-hydroxy-3-(all-trans-polyprenyl)benzoate + H(+) = a 2-(all-trans-polyprenyl)phenol + CO2. Its pathway is cofactor biosynthesis; ubiquinone biosynthesis. Functionally, catalyzes the decarboxylation of 3-octaprenyl-4-hydroxy benzoate to 2-octaprenylphenol, an intermediate step in ubiquinone biosynthesis. The protein is 3-octaprenyl-4-hydroxybenzoate carboxy-lyase of Shigella flexneri.